The following is a 260-amino-acid chain: Snake venom serine protease homolog (260 aa).

A signal peptide spans 1–18 (MVLVRVLANLLMLQLSYA). A propeptide spanning residues 19–24 (QKSSEL) is cleaved from the precursor. A Peptidase S1 domain is found at 25 to 251 (IIGGDECNIN…HLNWIQSIIA (227 aa)). 6 disulfide bridges follow: Cys31-Cys165, Cys52-Cys68, Cys100-Cys258, Cys144-Cys212, Cys176-Cys191, and Cys202-Cys227. N-linked (GlcNAc...) asparagine glycosylation is found at Asn123 and Asn124. Asn253 carries an N-linked (GlcNAc...) asparagine glycan.

It belongs to the peptidase S1 family. Snake venom subfamily. As to expression, expressed by the venom gland.

It is found in the secreted. Snake venom serine protease homolog that may act in the hemostasis system of the prey. This chain is Snake venom serine protease homolog, found in Protobothrops jerdonii (Jerdon's pitviper).